The chain runs to 905 residues: FIGNL1-interacting regulator of recombination and mitosis (905 aa).

Serine 101 and serine 796 each carry phosphoserine. At lysine 845 the chain carries N6-acetyllysine.

In terms of assembly, interacts (via its N-terminal region) with PLK1; controls PLK1 kinase activity. Interacts (via the KVVXF motif) with PPP1CC; controls PLK1 kinase activity. Interacts with FIGNL1; may regulate homologous recombination. In terms of processing, phosphorylation at Ser-101 by PLK1 strengthens FIRRM-PLK1 interaction. Phosphorylation at Ser-796 by PLK1 negatively regulates its interaction with PPP1CC.

It is found in the chromosome. Its subcellular location is the centromere. The protein resides in the kinetochore. It localises to the nucleus. The protein localises to the midbody. It is found in the cytoplasm. Its subcellular location is the cytoskeleton. The protein resides in the spindle. Functionally, regulates PLK1 kinase activity at kinetochores and promotes faithful chromosome segregation in prometaphase by bridging kinase and phosphatase activities. Phosphorylation of FIRRM by PLK1 negatively regulates its interaction with the phosphatase, PPP1CC, thus creating a negative feedback loop for maintaining proper PLK1 kinase activity during mitosis. In complex with FIGL1 may regulate homologous recombination. In Rattus norvegicus (Rat), this protein is FIGNL1-interacting regulator of recombination and mitosis.